A 423-amino-acid polypeptide reads, in one-letter code: Gamma-glutamyl phosphate reductase (423 aa).

Over residues 1 to 14 (MTLQAAPRSAAAQQ) the composition is skewed to low complexity. Residues 1 to 25 (MTLQAAPRSAAAQQREPDLRQEVHD) are disordered. Basic and acidic residues predominate over residues 15-25 (REPDLRQEVHD).

It belongs to the gamma-glutamyl phosphate reductase family.

The protein resides in the cytoplasm. The enzyme catalyses L-glutamate 5-semialdehyde + phosphate + NADP(+) = L-glutamyl 5-phosphate + NADPH + H(+). The protein operates within amino-acid biosynthesis; L-proline biosynthesis; L-glutamate 5-semialdehyde from L-glutamate: step 2/2. Functionally, catalyzes the NADPH-dependent reduction of L-glutamate 5-phosphate into L-glutamate 5-semialdehyde and phosphate. The product spontaneously undergoes cyclization to form 1-pyrroline-5-carboxylate. This chain is Gamma-glutamyl phosphate reductase, found in Mycobacterium marinum (strain ATCC BAA-535 / M).